The sequence spans 544 residues: Chaperonin GroEL 1 (544 aa).

ATP-binding positions include 30–33 (TLGP), 87–91 (DGTTT), Gly-415, 480–482 (NAA), and Asp-496.

Belongs to the chaperonin (HSP60) family. In terms of assembly, forms a cylinder of 14 subunits composed of two heptameric rings stacked back-to-back. Interacts with the co-chaperonin GroES.

The protein localises to the cytoplasm. It catalyses the reaction ATP + H2O + a folded polypeptide = ADP + phosphate + an unfolded polypeptide.. In terms of biological role, together with its co-chaperonin GroES, plays an essential role in assisting protein folding. The GroEL-GroES system forms a nano-cage that allows encapsulation of the non-native substrate proteins and provides a physical environment optimized to promote and accelerate protein folding. The polypeptide is Chaperonin GroEL 1 (Polaromonas naphthalenivorans (strain CJ2)).